The following is a 265-amino-acid chain: Acrosomal protein SP-10 (265 aa).

The N-terminal stretch at 1–21 (MNRFLLLMSLYLLGSARGTSS) is a signal peptide. Residues 62–181 (LNTLSEHGSS…EQASGAPISS (120 aa)) are disordered. Repeat copies occupy residues 66–70 (SEHGS), 71–75 (SEHGS), 85–88 (SGEH), 91–95 (SEHAS), 110–114 (VGEQP), 115–119 (SGEQP), 120–123 (SGEH), 125–129 (SGEQP), 135–139 (SGEQP), 140–144 (SDEQP), 145–148 (SGEH), 150–154 (SGEQP), 155–159 (SGEQA), 160–164 (SGEQP), 165–168 (SGEH), and 170–174 (SGEQA). Positions 66-95 (SEHGSSEHGSSKHTVAEHTSGEHAESEHAS) are 3 X 5 AA repeats of S-E-H-[GA]-S. Residues 69–110 (GSSEHGSSKHTVAEHTSGEHAESEHASGEPAATEHAEGEHTV) are compositionally biased toward basic and acidic residues. The 4 X 4 AA repeats of S-G-E-H stretch occupies residues 85–168 (SGEHAESEHA…ASGEQPSGEH (84 aa)). Residues 110–174 (VGEQPSGEQP…SGEHASGEQA (65 aa)) are 9 X 5 AA repeats of [SV]-G-E-Q-[PSA]. Positions 152-163 (EQPSGEQASGEQ) are enriched in polar residues. Residue N258 is glycosylated (N-linked (GlcNAc...) asparagine).

In terms of tissue distribution, testis.

The protein localises to the cytoplasmic vesicle. It is found in the secretory vesicle. The protein resides in the acrosome. This is Acrosomal protein SP-10 (ACRV1) from Homo sapiens (Human).